The chain runs to 523 residues: Tryptophan 6-halogenase SttH (523 aa).

Gly14, Ser40, Ile43, Val46, Val48, and Ala51 together coordinate FAD. Lys79 is a catalytic residue. Pro97 is an L-tryptophan binding site. FAD is bound by residues Val203 and Leu354. 2 residues coordinate chloride: Thr365 and Gly366. Ile367 provides a ligand contact to FAD. Tyr456 and Tyr457 together coordinate L-tryptophan.

This sequence belongs to the flavin-dependent halogenase family. Bacterial tryptophan halogenase subfamily. As to quaternary structure, homodimer.

It catalyses the reaction L-tryptophan + FADH2 + chloride + O2 = 6-chloro-L-tryptophan + FAD + 2 H2O. It carries out the reaction D-tryptophan + FADH2 + chloride + O2 = 6-chloro-D-tryptophan + FAD + 2 H2O. Catalyzes the chlorination of tryptophan (Trp) at C6 position to yield 6-chloro-tryptophan. Accepts both L and D-Trp as the substrates. The enzyme also uses bromide to yield 6-bromo-Trp. In vitro, can also catalyze the halogenation of 3-indolepropionic acid, N-methyltryptophan and non-indolic aromatic substrates such as kynurenine, anthranilamide and N-phenylanthranilic acid. The protein is Tryptophan 6-halogenase SttH of Streptomyces toxytricini (Actinomyces toxytricini).